The primary structure comprises 108 residues: Nucleoid-associated protein PSPTO_3645 (108 aa).

Residues 85-96 (QASQDKTASMTA) are compositionally biased toward polar residues. The tract at residues 85-108 (QASQDKTASMTAGMQLPPGMKLPF) is disordered.

It belongs to the YbaB/EbfC family. Homodimer.

It is found in the cytoplasm. It localises to the nucleoid. Functionally, binds to DNA and alters its conformation. May be involved in regulation of gene expression, nucleoid organization and DNA protection. The chain is Nucleoid-associated protein PSPTO_3645 from Pseudomonas syringae pv. tomato (strain ATCC BAA-871 / DC3000).